Here is an 876-residue protein sequence, read N- to C-terminus: MAP7 domain-containing protein 3 (876 aa).

3 disordered regions span residues 30–139, 162–200, and 402–438; these read AEER…KFKA, GGVM…VDNT, and TEAP…IDKR. Residues 39-54 show a composition bias toward polar residues; that stretch reads INSSAGANKRSSSTPD. A coiled-coil region spans residues 58-136; it reads LKNDVKQQLA…KQKQAEDTEK (79 aa). 2 stretches are compositionally biased toward basic and acidic residues: residues 60–139 and 169–196; these read NDVK…KFKA and KSGK…DMQH. A phosphoserine mark is found at Ser-417 and Ser-483. 2 coiled-coil regions span residues 549 to 578 and 626 to 658; these read IQIR…IARK and SAMM…RRKA. 2 disordered regions span residues 558–683 and 742–783; these read QSKN…EIFP and IQGK…NPNH. Composition is skewed to basic and acidic residues over residues 559 to 590 and 630 to 659; these read SKNE…DKVP and KSRD…RKAS. Residues 665–679 are compositionally biased toward acidic residues; the sequence is SEDEADDEGESEDSL. A compositionally biased stretch (basic residues) spans 750 to 763; that stretch reads SAKKPPTRPIRSRK. Residues 771–782 show a composition bias toward polar residues; sequence IRPTQSASSNPN.

It belongs to the MAP7 family. As to expression, high expression in lung, skeletal muscle, brain, and kidney, with much weaker expression in spleen, small intestine, liver, and heart.

The protein localises to the cytoplasm. It is found in the cytoskeleton. It localises to the spindle. Promotes the assembly and stability of microtubules. This is MAP7 domain-containing protein 3 (Map7d3) from Mus musculus (Mouse).